A 125-amino-acid polypeptide reads, in one-letter code: Egg cell-secreted protein 1.2 (125 aa).

An N-terminal signal peptide occupies residues 1-22; the sequence is MASNTSFLFATIAILLVLNISG.

Belongs to the plant egg cell-secreted peptide family. As to expression, restricted to female reproductive tissues, specifically accumulating in storage vesicles of the unfertilized egg cell.

The protein localises to the cytoplasmic vesicle. Its subcellular location is the secreted. In terms of biological role, involved in the regulation of gamete interactions during the double fertilization and to prevent multiple-pollen tube attraction; mediates the redistribution of the gamete fusogen HAP2/GCS1 to the cell surface after secretion upon sperm arrival. This is Egg cell-secreted protein 1.2 (EC1.2) from Arabidopsis thaliana (Mouse-ear cress).